Reading from the N-terminus, the 391-residue chain is Probable malate dehydrogenase 1 (391 aa).

Residue 68 to 74 participates in NAD(+) binding; sequence GAAGQIA. The substrate site is built by arginine 149 and arginine 155. Residues asparagine 162, glutamine 169, and 186-188 each bind NAD(+); that span reads VGN. Residues asparagine 188 and arginine 219 each contribute to the substrate site. The Proton acceptor role is filled by histidine 244.

Belongs to the LDH/MDH superfamily. MDH type 2 family. As to quaternary structure, homodimer.

It carries out the reaction (S)-malate + NAD(+) = oxaloacetate + NADH + H(+). Functionally, catalyzes the reversible oxidation of malate to oxaloacetate. This chain is Probable malate dehydrogenase 1 (mdhA), found in Dictyostelium discoideum (Social amoeba).